A 343-amino-acid polypeptide reads, in one-letter code: MDNRSNALNAALSQIERQFGKGSVMRLGDPGLIPDIDVISTGSLGLDIALGVGGLPRGRIIEIYGPEASGKTTLALQTIASCQRMGGTAAFVDAEHALDAIYAGKLGVKVEDLLVSQPDTGEQALEITDMLVRSGAVDLIVIDSVAALTPKAEIEGDMGDSHMGLQARLMSQALRKLTANIKKSNTLVIFINQIRMKIGVMFGNPETTTGGNALKFYSSVRLDIRRIGAIKKGEEILGSETRVKVVKNKVAPPFRQVEFDILYGLGISRESELIDLGVKNELVEKAGAWYSYNGERIGQGKENVRQFFLENPKIAGEIETRLREKLLPHRQGEKIAEEVNAAE.

This sequence belongs to the RecA family.

It is found in the cytoplasm. Its function is as follows. Can catalyze the hydrolysis of ATP in the presence of single-stranded DNA, the ATP-dependent uptake of single-stranded DNA by duplex DNA, and the ATP-dependent hybridization of homologous single-stranded DNAs. It interacts with LexA causing its activation and leading to its autocatalytic cleavage. The sequence is that of Protein RecA from Coxiella burnetii (strain RSA 493 / Nine Mile phase I).